Reading from the N-terminus, the 185-residue chain is Ribosome-recycling factor (185 aa).

This sequence belongs to the RRF family.

It localises to the cytoplasm. Its function is as follows. Responsible for the release of ribosomes from messenger RNA at the termination of protein biosynthesis. May increase the efficiency of translation by recycling ribosomes from one round of translation to another. This chain is Ribosome-recycling factor, found in Aliarcobacter butzleri (strain RM4018) (Arcobacter butzleri).